Reading from the N-terminus, the 521-residue chain is Beta-glucosidase 6 (521 aa).

An N-terminal signal peptide occupies residues 1-38 (MGRIKSSSGRCSTARLEAVAVLVVVFGVASSSLRGCIA). A beta-D-glucoside contacts are provided by residues Gln-64, His-165, and 210–211 (NE). Glu-211 acts as the Proton donor in catalysis. An intrachain disulfide couples Cys-230 to Cys-238. N-linked (GlcNAc...) asparagine glycosylation occurs at Asn-291. Tyr-354 is an a beta-D-glucoside binding site. Asn-362 and Asn-372 each carry an N-linked (GlcNAc...) asparagine glycan. A beta-D-glucoside is bound by residues Glu-427, Trp-477, 484–485 (EW), and Phe-493. The active-site Nucleophile is the Glu-427.

It belongs to the glycosyl hydrolase 1 family. In terms of assembly, homodimer.

The protein localises to the secreted. It carries out the reaction Hydrolysis of terminal, non-reducing beta-D-glucosyl residues with release of beta-D-glucose.. Hydrolyzes glycosides, oligosaccharides and hydrophobic glycosides. Possesses gibberellin ester beta-D-glucosidase activity. Can hydrolyze gibberellin A4 beta-D-glucosyl ester in vitro. This is Beta-glucosidase 6 from Oryza sativa subsp. japonica (Rice).